A 135-amino-acid polypeptide reads, in one-letter code: MKFSQRTLLKLKNKNKKLRPNKYKKLKRETLRGRIKGTVERPRLSVYRSNENIYAQIIDDTNSKTLISCSTLDRSIKLVISTGRTCDASRLMGEKLAKLSLKKNITKIVFDRGPYLYHGRIKAVADGARAGGLQF.

It belongs to the universal ribosomal protein uL18 family. In terms of assembly, part of the 50S ribosomal subunit; contacts the 5S rRNA.

Its subcellular location is the plastid. It is found in the chloroplast. Its function is as follows. Binds 5S rRNA, forms part of the central protuberance of the 50S subunit. This Phaeodactylum tricornutum (strain CCAP 1055/1) protein is Large ribosomal subunit protein uL18c (rpl18).